Consider the following 446-residue polypeptide: N-succinylarginine dihydrolase (446 aa).

Substrate-binding positions include 19 to 28, Asn-110, and 137 to 138; these read AGLSFGNVAS and HR. Glu-174 is a catalytic residue. Arg-213 serves as a coordination point for substrate. The active site involves His-249. The substrate site is built by Asp-251 and Asn-364. Cys-370 (nucleophile) is an active-site residue.

This sequence belongs to the succinylarginine dihydrolase family. As to quaternary structure, homodimer.

It catalyses the reaction N(2)-succinyl-L-arginine + 2 H2O + 2 H(+) = N(2)-succinyl-L-ornithine + 2 NH4(+) + CO2. Its pathway is amino-acid degradation; L-arginine degradation via AST pathway; L-glutamate and succinate from L-arginine: step 2/5. In terms of biological role, catalyzes the hydrolysis of N(2)-succinylarginine into N(2)-succinylornithine, ammonia and CO(2). This chain is N-succinylarginine dihydrolase, found in Burkholderia mallei (strain NCTC 10247).